Consider the following 270-residue polypeptide: Tetraspanin-2 (270 aa).

The Cytoplasmic segment spans residues 1 to 8 (MALANNLT). A helical membrane pass occupies residues 9-29 (AILNLLALLCSIPITASGIWL). Topologically, residues 30-42 (ASKPDNECVNLLR) are extracellular. Residues 43–63 (WPVVVLGVLILVVSATGFIGA) form a helical membrane-spanning segment. Residues 64-74 (YKYKETLLAVY) lie on the Cytoplasmic side of the membrane. The helical transmembrane segment at 75–95 (LCCMAILIGLLLVVLIFAFVV) threads the bilayer. Over 96–232 (TRPDGSYRVP…NLRKEWRKAN (137 aa)) the chain is Extracellular. Residues 233-253 (LILIITVVVLIWVYVIACSAF) form a helical membrane-spanning segment. Topologically, residues 254–270 (RNAQTEDLFRKYKQGWV) are cytoplasmic.

The protein belongs to the tetraspanin (TM4SF) family.

It is found in the membrane. Functionally, may be involved in the regulation of cell differentiation. This chain is Tetraspanin-2 (TET2), found in Arabidopsis thaliana (Mouse-ear cress).